Here is a 4059-residue protein sequence, read N- to C-terminus: Fibrocystin (4059 aa).

The N-terminal stretch at 1-18 is a signal peptide; sequence MMLAWLVSLLSMEVLLLA. At 19-3851 the chain is on the extracellular side; the sequence is KPYSSFQFEP…LPVASKERST (3833 aa). Residues 25 to 109 enclose the IPT/TIG 1; atypical domain; it reads QFEPAEGSLA…AGPYSLEMRS (85 aa). N55 and N224 each carry an N-linked (GlcNAc...) asparagine glycan. IPT/TIG domains are found at residues 135–230 and 257–333; these read PVLY…FSVF and PEIL…FEVG. Residues 323–483 enclose the PA14 domain; sequence AGNRGLRFEV…TWLNPDVVNT (161 aa). Residues N355, N385, N518, N527, N620, N639, N709, N867, N965, N975, N1082, N1114, N1133, N1239, N1273, N1308, N1319, N1344, N1373, N1456, N1471, N1528, N1613, N1627, N1694, N1760, N1775, N1875, N1879, N1915, N1955, N2030, and N2139 are each glycosylated (N-linked (GlcNAc...) asparagine). 2 IPT/TIG domains span residues 945–997 and 1017–1100; these read LVHF…FMLV and PRLD…AFTY. Positions 1106–1190 constitute an IPT/TIG 6; atypical domain; the sequence is PVIVSLSRNR…IRSQGVDLYI (85 aa). In terms of domain architecture, IPT/TIG 7 spans 1198 to 1266; sequence SVEPCSGSLL…RADVLTVLAS (69 aa). The 82-residue stretch at 1297 to 1378 folds into the IPT/TIG 8; atypical domain; it reads PVVTAMWGEF…MGFANMSVVP (82 aa). The region spanning 1385 to 1466 is the IPT/TIG 9 domain; it reads PQIIAIFPTH…ITVLVNGLTS (82 aa). IPT/TIG domains are found at residues 1482 to 1566 and 1569 to 1637; these read PIVD…RNFF and PQVL…IDVN. One can recognise an IPT/TIG 12; atypical domain in the interval 1654 to 1738; sequence PELLSVSRSQ…VLRATVTSVT (85 aa). One can recognise a G8 1 domain in the interval 1928-2049; it reads HSWFPQRVPH…PEVTVTYLQA (122 aa). PbH1 repeat units lie at residues 2244–2266 and 2287–2321; these read TWGL…LLGS and EQGS…YTFS. N2380 carries an N-linked (GlcNAc...) asparagine glycan. PbH1 repeat units follow at residues 2404 to 2426 and 2459 to 2481; these read SNNL…DILE and RWEL…AIRT. N-linked (GlcNAc...) asparagine glycans are attached at residues N2466, N2503, N2529, N2547, N2581, N2589, N2627, N2747, and N2762. The G8 2 domain occupies 2741–2867; it reads KGWGGYNHTI…PKKSWVHLGA (127 aa). 2 PbH1 repeats span residues 3004 to 3026 and 3027 to 3049; these read SAGS…HASS and SHGV…DVEG. N3051 is a glycosylation site (N-linked (GlcNAc...) asparagine). Residues 3080–3102 form a PbH1 7 repeat; it reads AEDIILHGNVVAGSERLGFHVGG. N-linked (GlcNAc...) asparagine glycosylation is found at N3133 and N3162. The PbH1 8 repeat unit spans residues 3188-3212; the sequence is TVQITLRNSVIVATSSSFDCIHDRK. 3 N-linked (GlcNAc...) asparagine glycosylation sites follow: N3218, N3719, and N3831. The helical transmembrane segment at 3852–3872 threads the bilayer; it reads IILALSLCSVASWVALSCLVC. The segment at 3869–3886 is ciliary targeting sequence (CST); the sequence is CLVCCWFKKSKTRKIKPE. Over 3873–4059 the chain is Cytoplasmic; it reads CWFKKSKTRK…LHTAPPETIQ (187 aa). The span at 3885 to 3898 shows a compositional bias: basic and acidic residues; the sequence is PEDISESQAKEQKK. Residues 3885-3915 are disordered; it reads PEDISESQAKEQKKNTHNSSKPRGLQAKTAK. A nuclear localization signal (NLS) region spans residues 3946-3970; that stretch reads KRKVSRLAVTEERTTTPAPKIPRIT. Residues 4015-4038 form a disordered region; it reads QERKQGQEPSQLDKGSDCTGLSQE.

As to quaternary structure, interacts with CAMLG. Interacts with PKD2. Interacts (via CST) with ARF4; this interaction allows an efficient PKHD1 trafficking to the cilium. Interacts (via CST) with RAB8A; this interaction controls trafficking through the endomembrane systeme and to the cilium. Interacts (via CST) with TULP3; this interaction allows PKHD1 trafficking to the cilium. In terms of processing, palmitoylated. Palmitoylation facilitates the trafficking to the cilia and membrane targeting. Post-translationally, N-glycosylated. Several proteolytic cleavages occur within the extracellular domain, whereas at least one cleavage occurs within the cytoplasmic domain. Cleaved by a probable proprotein convertase which produces an extracellular domain (polyductin extracellular domain, (PECD)) and a C-terminal fragment (polyductin transmembrane fragment (PTM)) which are tethered together by disulfide bonds. This extracellular domain (PECD) is then shed from the primary cilium by activation of a member of the ADAM metalloproteinase disintegrins family, resulting in concomitant release of an intra-cellular C-terminal fragment (ICD) via a gamma-secretase-dependent process. The proteolytic cleavage of the C-terminal intracellular fragment (ICD) is controlled by cytosolic calcium concentration and activation of PKC. Expressed in bile ducts and distal nephron segments but is absent from the proximal tubule. Expressed in pancreas and kidney but also in the liver. Expressed primarily in the distal tubule and thick ascending limb of the loop of Henle, and at low-level in the proximal tubule before renal development is complete at P0.

The protein localises to the cell membrane. It localises to the cytoplasm. The protein resides in the apical cell membrane. Its subcellular location is the cytoskeleton. It is found in the cilium basal body. The protein localises to the cell projection. It localises to the cilium. The protein resides in the spindle. Its subcellular location is the chromosome. It is found in the centromere. The protein localises to the nucleus. It localises to the secreted. The protein resides in the extracellular exosome. Its subcellular location is the endoplasmic reticulum. It is found in the golgi apparatus. Its function is as follows. Promotes ciliogenesis in renal epithelial cells and therefore participates in the tubules formation and/or ensures the maintenance of the architecture of the lumen of the kidney. Has an impact on cellular symmetry by ensuring correct bipolar cell division through the regulation of centrosome duplication and mitotic spindle assembly and by maintaining oriented cell division (OCD) during tubular elongation through planar cell polarity (PCP) pathway. During epithelial cell morphogenesis, it also regulates cell-cell and cell-matrix adhesion and participates in cell motility. Promotes cell-cell contact through the positive regulation of PTK2 kinase activity leading to either positive regulation of epithelial cell proliferation through the HRAS/RAF1 pathways, or negative regulation of apoptosis through the PDK1/AKT1 pathway. May act in collecting-duct and biliary differentiation. May participate in the regulation of the cholangiocytes proliferation and the CCN2 production in an CXCL8-dependent manner. The protein is Fibrocystin of Mus musculus (Mouse).